Consider the following 104-residue polypeptide: Ig lambda-2 chain C region (104 aa).

Residues 6-99 enclose the Ig-like domain; that stretch reads PTLTVFPPST…EGNTVEKSLS (94 aa). Cys-27 and Cys-85 are disulfide-bonded.

The chain is Ig lambda-2 chain C region from Rattus norvegicus (Rat).